Reading from the N-terminus, the 306-residue chain is Acetaldehyde dehydrogenase (306 aa).

The active-site Acyl-thioester intermediate is C131. NAD(+) is bound by residues 162–170 and N273; that span reads SAGPGTRKN.

Belongs to the acetaldehyde dehydrogenase family.

It catalyses the reaction acetaldehyde + NAD(+) + CoA = acetyl-CoA + NADH + H(+). The polypeptide is Acetaldehyde dehydrogenase (Albidiferax ferrireducens (strain ATCC BAA-621 / DSM 15236 / T118) (Rhodoferax ferrireducens)).